The sequence spans 435 residues: 5-hydroxybenzimidazole synthase (435 aa).

Residues methionine 95, tyrosine 124, histidine 163, 186–188 (SKG), 227–230 (NGLR), and glutamate 266 each bind substrate. Residue histidine 270 coordinates Zn(2+). Tyrosine 293 contacts substrate. Histidine 334 lines the Zn(2+) pocket. Cysteine 410, cysteine 413, and cysteine 417 together coordinate [4Fe-4S] cluster.

Belongs to the ThiC family. 5-hydroxybenzimidazole synthase subfamily. As to quaternary structure, homodimer. [4Fe-4S] cluster is required as a cofactor.

The catalysed reaction is 5-amino-1-(5-phospho-beta-D-ribosyl)imidazole + AH2 + S-adenosyl-L-methionine = 5-hydroxybenzimidazole + 5'-deoxyadenosine + formate + L-methionine + A + NH4(+) + phosphate + 2 H(+). Its pathway is cofactor biosynthesis; adenosylcobalamin biosynthesis. Catalyzes the complex conversion of aminoimidazole ribotide (AIR) to 5-hydroxybenzimidazole (5-HBI) in a radical S-adenosyl-L-methionine (SAM)-dependent reaction. Is thus involved in the anaerobic biosynthesis of dimethylbenzimidazole (DMB), the lower axial ligand of vitamin B12 (cobalamin). The chain is 5-hydroxybenzimidazole synthase from Desulfuromonas acetoxidans (strain DSM 684 / 11070).